Reading from the N-terminus, the 313-residue chain is Beta-ketoacyl-[acyl-carrier-protein] synthase III (313 aa).

Residues cysteine 112 and histidine 238 contribute to the active site. The ACP-binding stretch occupies residues 239 to 243 (QANIR). The active site involves asparagine 268.

This sequence belongs to the thiolase-like superfamily. FabH family. Homodimer.

The protein localises to the cytoplasm. It carries out the reaction malonyl-[ACP] + acetyl-CoA + H(+) = 3-oxobutanoyl-[ACP] + CO2 + CoA. It functions in the pathway lipid metabolism; fatty acid biosynthesis. Catalyzes the condensation reaction of fatty acid synthesis by the addition to an acyl acceptor of two carbons from malonyl-ACP. Catalyzes the first condensation reaction which initiates fatty acid synthesis and may therefore play a role in governing the total rate of fatty acid production. Possesses both acetoacetyl-ACP synthase and acetyl transacylase activities. Its substrate specificity determines the biosynthesis of branched-chain and/or straight-chain of fatty acids. The chain is Beta-ketoacyl-[acyl-carrier-protein] synthase III from Staphylococcus aureus (strain bovine RF122 / ET3-1).